Here is a 264-residue protein sequence, read N- to C-terminus: Probable pectate lyase D (264 aa).

An N-terminal signal peptide occupies residues 1-17; sequence MFFKQLAVLSFATSALA. A glycan (N-linked (GlcNAc...) asparagine) is linked at Asn-60. Positions 234-264 are disordered; the sequence is YEGTDNNDEEPQEISTGPSNACQYTDPLPSC. The span at 235–245 shows a compositional bias: acidic residues; it reads EGTDNNDEEPQ. The segment covering 246–256 has biased composition (polar residues); sequence EISTGPSNACQ.

The protein belongs to the polysaccharide lyase 3 family. Ca(2+) is required as a cofactor.

Its subcellular location is the secreted. The catalysed reaction is Eliminative cleavage of (1-&gt;4)-alpha-D-galacturonan to give oligosaccharides with 4-deoxy-alpha-D-galact-4-enuronosyl groups at their non-reducing ends.. Its function is as follows. Pectinolytic enzyme consist of four classes of enzymes: pectin lyase, polygalacturonase, pectin methylesterase and rhamnogalacturonase. Among pectinolytic enzymes, pectin lyase is the most important in depolymerization of pectin, since it cleaves internal glycosidic bonds of highly methylated pectins. Favors pectate, the anion, over pectin, the methyl ester. The polypeptide is Probable pectate lyase D (plyD) (Emericella nidulans (strain FGSC A4 / ATCC 38163 / CBS 112.46 / NRRL 194 / M139) (Aspergillus nidulans)).